The following is a 177-amino-acid chain: Dual-action ribosomal maturation protein DarP (177 aa).

The tract at residues 1–26 is disordered; it reads MKIVGDSEHFKQPYDSDEEYVSKTED.

This sequence belongs to the DarP family.

It is found in the cytoplasm. In terms of biological role, member of a network of 50S ribosomal subunit biogenesis factors which assembles along the 30S-50S interface, preventing incorrect 23S rRNA structures from forming. Promotes peptidyl transferase center (PTC) maturation. This Shewanella sp. (strain MR-4) protein is Dual-action ribosomal maturation protein DarP.